We begin with the raw amino-acid sequence, 454 residues long: MDSYVIQTNVNDSLPSVLDVRVNIGGRSSVQGRAKGRKARWNVRPSDMSNKTFNPIRAIVDNMKVKPNPNKTVISLSIGDPTVFGNLPTDPEVTQAMKDALDSGKYNGYAPSIGYLSSREEVASYYHCPEAPLEAKDVILTSGCSQAIELCLAVLANPGQNILIPRPGFSLYRTLAESMGIEVKLYNLLPEKSWEIDLKQLESLIDEKTACLVVNNPSNPCGSVFSKRHLQKILAVAERQCVPILADEIYGDMVFSDCKYEPMATLSTNVPILSCGGLAKRWLVPGWRLGWILIHDRRDIFGNEIRDGLVKLSQRILGPCTIVQGALKSILQRTPQEFYQDTLSFLKSNADLCYGALSAIPGLQPVRPSGAMYLMVGIEMEHFPEFENDVEFTERLIAEQSVHCLPATCFEYPNFFRVVITVPEVMMLEACSRIQEFCEQHYHCAEGSQEECDK.

Position 1 is an N-acetylmethionine (Met-1). At Lys-280 the chain carries N6-(pyridoxal phosphate)lysine. Phosphoserine is present on Ser-448.

Belongs to the class-I pyridoxal-phosphate-dependent aminotransferase family. In terms of assembly, homodimer. Requires pyridoxal 5'-phosphate as cofactor.

The enzyme catalyses L-tyrosine + 2-oxoglutarate = 3-(4-hydroxyphenyl)pyruvate + L-glutamate. It functions in the pathway amino-acid degradation; L-phenylalanine degradation; acetoacetate and fumarate from L-phenylalanine: step 2/6. Functionally, transaminase involved in tyrosine breakdown. Converts tyrosine to p-hydroxyphenylpyruvate. Can catalyze the reverse reaction, using glutamic acid, with 2-oxoglutarate as cosubstrate (in vitro). Has much lower affinity and transaminase activity for phenylalanine. In Mus musculus (Mouse), this protein is Tyrosine aminotransferase (Tat).